Here is a 368-residue protein sequence, read N- to C-terminus: Ferrochelatase (368 aa).

H209 and E290 together coordinate Fe cation.

It belongs to the ferrochelatase family.

The protein localises to the cytoplasm. The enzyme catalyses heme b + 2 H(+) = protoporphyrin IX + Fe(2+). The protein operates within porphyrin-containing compound metabolism; protoheme biosynthesis; protoheme from protoporphyrin-IX: step 1/1. In terms of biological role, catalyzes the ferrous insertion into protoporphyrin IX. This chain is Ferrochelatase, found in Herminiimonas arsenicoxydans.